A 72-amino-acid chain; its full sequence is Crustacean hyperglycemic hormone (72 aa).

Q1 carries the post-translational modification Pyrrolidone carboxylic acid. A D-phenylalanine modification is found at F3. 3 disulfides stabilise this stretch: C7/C43, C23/C39, and C26/C52. The residue at position 72 (V72) is a Valine amide.

In terms of tissue distribution, produced by the medulla terminalis X-organ in the eyestalks and transported to the sinus gland where they are stored and released.

It localises to the secreted. In terms of biological role, hormone found in the sinus gland of isopods and decapods which controls the blood sugar level. Has a secretagogue action over the amylase released from the midgut gland. May act as a stress hormone and may be involved in the control of molting and reproduction. The chain is Crustacean hyperglycemic hormone from Astacus astacus (Noble crayfish).